Reading from the N-terminus, the 180-residue chain is Der GTPase-activating protein YihI (180 aa).

Disordered stretches follow at residues 1-88 (MTRK…KERR) and 147-180 (PEVT…FGKE). Basic and acidic residues-rich tracts occupy residues 18–33 (FREK…ARKS), 50–67 (EALD…DPRL), 77–88 (VEKKPTTKKERR), and 153–163 (APVRKGAKTDE). Acidic residues predominate over residues 164 to 173 (DLLDQFENMD).

The protein belongs to the YihI family. As to quaternary structure, interacts with Der.

A GTPase-activating protein (GAP) that modifies Der/EngA GTPase function. May play a role in ribosome biogenesis. The protein is Der GTPase-activating protein YihI of Photobacterium profundum (strain SS9).